A 126-amino-acid polypeptide reads, in one-letter code: Large ribosomal subunit protein bL17 (126 aa).

It belongs to the bacterial ribosomal protein bL17 family. In terms of assembly, part of the 50S ribosomal subunit. Contacts protein L32.

This chain is Large ribosomal subunit protein bL17, found in Lactococcus lactis subsp. lactis (strain IL1403) (Streptococcus lactis).